The following is an 80-amino-acid chain: YEEMVEFMEKNLLSVAYKIISSIEQKEESRICEGILRLLDSHLIPSSTAAESKSAQDIAAAELAPTHPIRDSTLIMQLLR.

The protein belongs to the 14-3-3 family.

The protein is 14-3-3-like protein 1 of Pseudotsuga menziesii (Douglas-fir).